A 339-amino-acid chain; its full sequence is DNA-directed RNA polymerase subunit alpha (339 aa).

An alpha N-terminal domain (alpha-NTD) region spans residues 1 to 238 (MVDPIVTKNW…EQLSIFINFD (238 aa)). Residues 250–339 (VEEQKLNENL…KAAPQGAPKV (90 aa)) form an alpha C-terminal domain (alpha-CTD) region.

The protein belongs to the RNA polymerase alpha chain family. As to quaternary structure, homodimer. The RNAP catalytic core consists of 2 alpha, 1 beta, 1 beta' and 1 omega subunit. When a sigma factor is associated with the core the holoenzyme is formed, which can initiate transcription.

It catalyses the reaction RNA(n) + a ribonucleoside 5'-triphosphate = RNA(n+1) + diphosphate. In terms of biological role, DNA-dependent RNA polymerase catalyzes the transcription of DNA into RNA using the four ribonucleoside triphosphates as substrates. This Anaeromyxobacter dehalogenans (strain 2CP-C) protein is DNA-directed RNA polymerase subunit alpha.